A 326-amino-acid polypeptide reads, in one-letter code: Neuferricin homolog (326 aa).

The N-terminal stretch at 1–34 is a signal peptide; that stretch reads MDKNRRRTDDAGLMTKTLAGIAALVFFLSFICSS. A Cytochrome b5 heme-binding domain is found at 98–197; sequence KHVFTPEQLH…KEYPLVGVVA (100 aa).

This sequence belongs to the cytochrome b5 family. MAPR subfamily.

It is found in the secreted. Its function is as follows. Heme-binding protein. This is Neuferricin homolog (tag-131) from Caenorhabditis elegans.